A 715-amino-acid chain; its full sequence is Probable serine/threonine-protein kinase MARK-B (715 aa).

Residues 24–37 show a composition bias toward low complexity; it reads SCSSNSTTSSSSNS. The interval 24–65 is disordered; that stretch reads SCSSNSTTSSSSNSPKQNKVSPGYRNKPQQQQHKKGHKMGNY. The Protein kinase domain occupies 65 to 320; that stretch reads YLLGKTIGSG…LDEIKTHVWV (256 aa). ATP is bound by residues 71–79 and Lys-94; that span reads IGSGTSSKV. The active-site Proton acceptor is Asp-187. Residues 335–344 are compositionally biased toward basic and acidic residues; it reads KVSDRLEKEQ. Disordered regions lie at residues 335–399 and 446–530; these read KVSD…IPQN and CSAP…HHST. Over residues 345–368 the composition is skewed to low complexity; the sequence is QQQTPQHQQTQQQLQPQSQLQQHS. Polar residues predominate over residues 381-399; it reads IGSNRPLNQSSPNLTIPQN. Low complexity-rich tracts occupy residues 451-478 and 487-513; these read SPHSISPQFISPSPSTSTTPPLSPLSVS and SSNPNIGHIPNNNHNSLSSSQNNINTS. Basic residues predominate over residues 517-527; it reads QYHHHHHHQNH. Residues 666–715 form the KA1 domain; sequence LCPRNETINFEIEVCKVNGMDMYGIKFKRLSGDAWSYSSSCIKIVESLKL.

Belongs to the protein kinase superfamily. CAMK Ser/Thr protein kinase family. SNF1 subfamily.

The enzyme catalyses L-seryl-[protein] + ATP = O-phospho-L-seryl-[protein] + ADP + H(+). It catalyses the reaction L-threonyl-[protein] + ATP = O-phospho-L-threonyl-[protein] + ADP + H(+). The polypeptide is Probable serine/threonine-protein kinase MARK-B (mrkB) (Dictyostelium discoideum (Social amoeba)).